Here is a 214-residue protein sequence, read N- to C-terminus: MDPAKIWWHSCLLSHKSWCNCTEPRNHLPGWPTSEGTSTEDGDIITDAEMLTLAEDTEGLHTTNKPDKPTSTALPINHFQADFMTAFQNYLSPHHHKTLISTPCDPATMTRTESSQKKVSDALQTLLTLATEDILSPPSPQHQTRSRVPAGMRGRWAAKQLENPADAEKDAADHRRRRTRRQLRYRQRVTRSPPYPDLGEPLESSSSSDSLDAY.

The disordered stretch occupies residues Thr131–Tyr214. The segment covering His174–Val189 has biased composition (basic residues). Over residues Asp197–Tyr214 the composition is skewed to low complexity.

This is an uncharacterized protein from Tupaia.